The following is a 96-amino-acid chain: Growth-regulated alpha protein (96 aa).

Positions 1-24 are cleaved as a signal peptide; the sequence is MVSATRSLLCAALPVLATSRQATG. Disulfide bonds link C33–C59 and C35–C75.

The protein belongs to the intercrine alpha (chemokine CxC) family. As to quaternary structure, monomer and homodimer. At least expressed in the lung and trachea.

The protein resides in the secreted. Functionally, has chemotactic activity for neutrophils. Contributes to neutrophil activation during inflammation. In Rattus norvegicus (Rat), this protein is Growth-regulated alpha protein (Cxcl1).